A 512-amino-acid polypeptide reads, in one-letter code: Proline--tRNA ligase (512 aa).

Acidic residues predominate over residues 460 to 470 (SDEDDEQDTTD). A disordered region spans residues 460-484 (SDEDDEQDTTDENMGVNNDTTVESN).

The protein belongs to the class-II aminoacyl-tRNA synthetase family. ProS type 3 subfamily. Homodimer.

Its subcellular location is the cytoplasm. The catalysed reaction is tRNA(Pro) + L-proline + ATP = L-prolyl-tRNA(Pro) + AMP + diphosphate. In terms of biological role, catalyzes the attachment of proline to tRNA(Pro) in a two-step reaction: proline is first activated by ATP to form Pro-AMP and then transferred to the acceptor end of tRNA(Pro). This Haloquadratum walsbyi (strain DSM 16790 / HBSQ001) protein is Proline--tRNA ligase.